The sequence spans 58 residues: uncharacterized protein (58 aa).

This is an uncharacterized protein from Bacillus anthracis.